A 685-amino-acid chain; its full sequence is Putative pentatricopeptide repeat-containing protein At3g08820 (685 aa).

PPR repeat units follow at residues 75-109 (NIFL…GLYL), 110-144 (HGFT…GFNH), 145-175 (DVAA…IPDR), 176-210 (SVVT…GVKP), 211-245 (DSYF…EMQK), 246-276 (NSFV…MVEK), 277-311 (DIVT…NLKP), 312-346 (DQFS…EFLT), 347-381 (NLFM…DIVI), 383-412 (NAAI…GISP), 413-443 (DGST…ISCV), and 449-479 (TVEH…MPMR). The type E motif stretch occupies residues 484–559 (VWGALLSGCR…IPGYSWIELE (76 aa)). The tract at residues 560–590 (GKVHEFLADDKSHPLSDKIYAKLEDLGNEMR) is type E(+) motif. Residues 591–685 (LMGFVPTTEF…NGSCSCNDYW (95 aa)) form a type DYW motif region.

The protein belongs to the PPR family. PCMP-H subfamily.

This chain is Putative pentatricopeptide repeat-containing protein At3g08820 (PCMP-H84), found in Arabidopsis thaliana (Mouse-ear cress).